The chain runs to 318 residues: MSVWAIGDLQGCYDITQRLLEKINFDPAQDTLWFCGDLVNRGGQSLETLRLVHSLRAHSVVVLGNHDLSLLAIGARSEEEQRKVNPDLLRIVLAEDRDALLDWLRMQKLAHVDRALGWMMIHAGLAPKWTTQMAEKHAREVEQQLQGGGYRKLLRNMYGDQPGWSPGLIGYDRSRAIINLFTRMRYCTPRGRIATDDKGTPGTQAQGLYPWFEVPGRVERDLKIVCGHWSALGLTITQGVHAIDTGAVWGGKLTALQLDTDELRVVQVPGREVTGPAPVARAPRRPRERLGRQRSRGNRGNAGNTAVPAKPPVDTPQD.

Positions 269–318 (PGREVTGPAPVARAPRRPRERLGRQRSRGNRGNAGNTAVPAKPPVDTPQD) are disordered. Residues 282–297 (APRRPRERLGRQRSRG) are compositionally biased toward basic residues. Over residues 309-318 (AKPPVDTPQD) the composition is skewed to pro residues.

The protein belongs to the Ap4A hydrolase family.

It catalyses the reaction P(1),P(4)-bis(5'-adenosyl) tetraphosphate + H2O = 2 ADP + 2 H(+). Functionally, hydrolyzes diadenosine 5',5'''-P1,P4-tetraphosphate to yield ADP. This is Bis(5'-nucleosyl)-tetraphosphatase, symmetrical from Xanthomonas oryzae pv. oryzae (strain PXO99A).